A 552-amino-acid polypeptide reads, in one-letter code: Putative transport protein HS_1470 (552 aa).

The next 5 helical transmembrane spans lie at 4 to 24, 28 to 48, 67 to 87, 95 to 115, and 157 to 177; these read IAITICILALVAVIGLWIGHW, GVGLGIGGVLFGGIIVAHFMN, LILFVYTIGIQVGPGFFASLL, GLATLIVVLGAVSVFVLYKVV, and MAYAMAYPFGICGILLSMWLI. 2 consecutive RCK C-terminal domains span residues 190–275 and 277–360; these read KQFQ…VIGE and IDMP…IIGN. 6 helical membrane-spanning segments follow: residues 370 to 390, 402 to 424, 438 to 458, 463 to 483, 495 to 515, and 529 to 549; these read MLPVFIGIGLGVLLGSIPFYI, AGGPLVVALILARIGSVGKLYWF, IVLFLAVVGLKSGGGFVDTLV, LEWMGYGMFITFIPLMITGII, LCGLLAGSMTDPPALAFANAI, and VYPLSMFLRIMSPQLLAILLW.

It belongs to the AAE transporter (TC 2.A.81) family. YidE subfamily.

It is found in the cell membrane. This chain is Putative transport protein HS_1470, found in Histophilus somni (strain 129Pt) (Haemophilus somnus).